The chain runs to 122 residues: Large ribosomal subunit protein uL14 (122 aa).

This sequence belongs to the universal ribosomal protein uL14 family. Part of the 50S ribosomal subunit. Forms a cluster with proteins L3 and L19. In the 70S ribosome, L14 and L19 interact and together make contacts with the 16S rRNA in bridges B5 and B8.

Its function is as follows. Binds to 23S rRNA. Forms part of two intersubunit bridges in the 70S ribosome. The polypeptide is Large ribosomal subunit protein uL14 (Methylorubrum populi (strain ATCC BAA-705 / NCIMB 13946 / BJ001) (Methylobacterium populi)).